Consider the following 302-residue polypeptide: MSHTAEIPMVPGSESPLELKPLKAVDPKAVYHRRAQRLLSLAKDSPLADYFELCRRVVAIQARLAAEADFGQLLAWGKDEAIPLSHLGSEADSYWQGLLQQLLSDLLPQVGEDLARVLRLLMQQSPEQLTSWGASLRQGHMSAVPARFSLFIWAAMGVYWSHWAPMVIKRIDQRKVAQQNLCPICGSHPVASVIVDQPRAGLRYLHCSLCESEWHYIRAHCTSCGQDKGTTLWSFDDTQAQVRIESCDECHGYTKMMFVEKSPLMDVVADDLATLMLDSELNAKGFGATTVNPLLLAHETEQ.

The protein belongs to the FdhE family.

It localises to the cytoplasm. Necessary for formate dehydrogenase activity. The chain is Protein FdhE homolog from Shewanella oneidensis (strain ATCC 700550 / JCM 31522 / CIP 106686 / LMG 19005 / NCIMB 14063 / MR-1).